Consider the following 456-residue polypeptide: MGTIEKRSFSFRLRRSFGDGGSTNSRNSNNNSSTCTNHNNQKRCSTPLTPTSTSTGRLEVPGAASVSRRSSIYKKPDKNDGGQIHLIPDVELPLMTFADQYNIEKTLAEGCFAKILLCRHRPTNTLVVLKAVHAELTTIKEFQKEFHYNYELSHHHHILSAYAVAFQTMDYYVFAMEHAPYGDLASNIGPNGLHENACKLISEQLSSALGFMHSKNLVHRDLKIENILVFTPDFTRVKLCDFGATTKKGLLVHKVKHTWTSCVPPEQLELIKNERFQCLPVSDSWQFGILLYNILTGNPPWQSADWVKDQSYANFMKYEQRKTTKVPDNFRRFSPRLMRCFRKYLSHDPEDRCKITEVAKYMKDRWVECRISTSKSATLISPTNHDQDSCIYLNQREGRLSGDENKLRFKRMMSTYGLDIPIDQAMVRRRVWDWLSTCDANFDPDVESLHALDLLQ.

A disordered region spans residues 15-78 (RSFGDGGSTN…RSSIYKKPDK (64 aa)). Low complexity predominate over residues 22 to 55 (STNSRNSNNNSSTCTNHNNQKRCSTPLTPTSTST). In terms of domain architecture, Protein kinase spans 101–367 (YNIEKTLAEG…VAKYMKDRWV (267 aa)). Residues 107 to 115 (LAEGCFAKI) and K130 contribute to the ATP site. D221 acts as the Proton acceptor in catalysis. S334 is subject to Phosphoserine; by PKA.

It belongs to the protein kinase superfamily. Ser/Thr protein kinase family. Mg(2+) serves as cofactor. Expressed in the mushroom bodies (at protein level).

It catalyses the reaction L-seryl-[protein] + ATP = O-phospho-L-seryl-[protein] + ADP + H(+). The catalysed reaction is L-threonyl-[protein] + ATP = O-phospho-L-threonyl-[protein] + ADP + H(+). With respect to regulation, activated by Pka-C1-mediated phosphorylation of Ser-334. Serine/threonine-protein kinase involved in memory formation. Together with the cAMP-dependent protein kinase A Pka-C1, promotes long-term memory (LTM) by regulating CrebB stability and activity. Involved in the maintenance of anesthesia-sensitive memory (ASM) which includes short-term memory (STM) and middle-term memory (MTM). The protein is Serine/threonine-protein kinase meng-po of Drosophila melanogaster (Fruit fly).